The chain runs to 547 residues: Phosphatidylinositol/phosphatidylcholine transfer protein SFH7 (547 aa).

The region spanning 130–304 (EIDQVLKHYP…FFGGLCTCAD (175 aa)) is the CRAL-TRIO domain. A coiled-coil region spans residues 464–526 (SSEYVIMVKR…KKALDETMVN (63 aa)).

It belongs to the SFH family.

The protein localises to the golgi apparatus membrane. The protein resides in the cell membrane. Its function is as follows. Required for transport of secretory proteins from the Golgi complex. Catalyzes the transfer of phosphatidylinositol and phosphatidylcholine between membranes in vitro. This is Phosphatidylinositol/phosphatidylcholine transfer protein SFH7 (SFH7) from Arabidopsis thaliana (Mouse-ear cress).